The sequence spans 3390 residues: Genome polyprotein (3390 aa).

The interaction with host EXOC1 stretch occupies residues 1 to 15; sequence MNNQRKKTGKPSINM. Over 1-100 the chain is Cytoplasmic; it reads MNNQRKKTGK…MLSIINKRKK (100 aa). The segment at 37–72 is hydrophobic; homodimerization of capsid protein C; it reads LLNGQGPMKLVMAFIAFLRFLAIPPTAGVLARWGTF. Residues 101 to 114 constitute a propeptide, ER anchor for the capsid protein C, removed in mature form by serine protease NS3; the sequence is TSLCLMMMLPATLA. Residues 101 to 118 form a helical membrane-spanning segment; sequence TSLCLMMMLPATLAFHLT. At 119 to 243 the chain is on the extracellular side; that stretch reads SRDGEPRMIV…VEKVETWALR (125 aa). The N-linked (GlcNAc...) asparagine; by host glycan is linked to Asn183. The chain crosses the membrane as a helical span at residues 244–264; sequence HPGFTILALFLAHYIGTSLTQ. Residue Lys265 is a topological domain, cytoplasmic. The helical transmembrane segment at 266–280 threads the bilayer; it reads VVIFILLMLVTPSMT. The Extracellular segment spans residues 281–723; that stretch reads MRCVGVGNRD…VHQIFGSAYT (443 aa). Intrachain disulfides connect Cys283–Cys310, Cys340–Cys401, Cys354–Cys385, and Cys372–Cys396. N-linked (GlcNAc...) asparagine; by host glycosylation is present at Asn347. A fusion peptide region spans residues 378-391; sequence DRGWGNGCGLFGKG. N-linked (GlcNAc...) asparagine; by host glycosylation occurs at Asn433. 2 disulfide bridges follow: Cys463–Cys563 and Cys580–Cys611. The helical transmembrane segment at 724–744 threads the bilayer; the sequence is ALFSGVSWIMKIGIGVLLTWI. The Cytoplasmic segment spans residues 745–750; the sequence is GLNSKN. Residues 751 to 771 traverse the membrane as a helical segment; that stretch reads TSMSFSCIAIGIITLYLGVVV. Over 772-1193 the chain is Extracellular; sequence QADMGCVINW…MIGSNASDRM (422 aa). Disulfide bonds link Cys777-Cys788, Cys828-Cys916, Cys952-Cys996, Cys1053-Cys1102, Cys1064-Cys1086, and Cys1085-Cys1089. N-linked (GlcNAc...) asparagine; by host glycosylation is found at Asn903 and Asn980. Residues Asn1132 and Asn1188 are each glycosylated (N-linked (GlcNAc...) asparagine; by host). A helical membrane pass occupies residues 1194–1218; it reads GMGVTYLALIATFKIQPFLALGFFL. Over 1219–1224 the chain is Cytoplasmic; it reads RKLTSR. Residues 1225 to 1243 traverse the membrane as a helical segment; sequence ENLLLGVGLAMAATLRLPE. Residues 1244–1267 lie on the Lumenal side of the membrane; it reads DIEQMANGIALGLMALKLITQFET. Residues 1268-1288 traverse the membrane as a helical segment; the sequence is YQLWTALVSLTCSNTIFTLTV. A topological domain (cytoplasmic) is located at residue Ala1289. Residues 1290–1308 form a helical membrane-spanning segment; that stretch reads WRTATLILAGISLLPVCQS. Over 1309–1315 the chain is Lumenal; it reads SSMRKTD. Residues 1316-1336 form a helical membrane-spanning segment; the sequence is WLPMTVAAMGVPPLPLFIFSL. The Cytoplasmic segment spans residues 1337 to 1344; it reads KDTLKRRS. Residues 1345 to 1365 form a helical membrane-spanning segment; the sequence is WPLNEGVMAVGLVSILASSLL. The Lumenal portion of the chain corresponds to 1366–1368; sequence RND. The helical transmembrane segment at 1369–1389 threads the bilayer; it reads VPMAGPLVAGGLLIACYVITG. Residues 1390 to 1443 lie on the Cytoplasmic side of the membrane; the sequence is TSADLTVEKAADVTWEEEAEQTGVSHNLMITVDDDGTMRIKDDETENILTVLLK. The segment at 1396–1435 is interacts with and activates NS3 protease; sequence VEKAADVTWEEEAEQTGVSHNLMITVDDDGTMRIKDDETE. An intramembrane region (helical) is located at residues 1444–1464; that stretch reads TALLIVSGIFPCSIPATLLVW. At 1465-2146 the chain is on the cytoplasmic side; sequence HTWQKQTQRS…VEELPETMET (682 aa). Positions 1474–1651 constitute a Peptidase S7 domain; it reads SGVLWDVPSP…NAEPDGPTPE (178 aa). Catalysis depends on charge relay system; for serine protease NS3 activity residues His1524, Asp1548, and Ser1608. The Helicase ATP-binding domain occupies 1654–1810; the sequence is EEMFKKRNLT…QSNAPIQDEE (157 aa). Residues 1658 to 1661 are important for RNA-binding; that stretch reads KKRN. 1667-1674 serves as a coordination point for ATP; sequence LHPGSGKT. A DEAH box motif is present at residues 1758-1761; sequence DEAH. In terms of domain architecture, Helicase C-terminal spans 1821 to 1986; sequence GNEWITDFVG…GIIPALFEPE (166 aa). Lys1862 carries the post-translational modification N6-acetyllysine; by host. A helical membrane pass occupies residues 2147 to 2167; the sequence is LLLLGLMILLTGGAMLFLISG. Over 2168-2169 the chain is Lumenal; it reads KG. Positions 2170 to 2190 form an intramembrane region, helical; the sequence is IGKTSIGLICVIASSGMLWMA. Position 2191 (Asp2191) is a topological domain, lumenal. A helical transmembrane segment spans residues 2192 to 2212; that stretch reads VPLQWIASAIVLEFFMMVLLI. The Cytoplasmic segment spans residues 2213–2227; sequence PEPEKQRTPQDNQLA. Residues 2228-2248 traverse the membrane as a helical segment; it reads YVVIGILTLAAIVAANEMGLL. At 2249-2273 the chain is on the lumenal side; the sequence is ETTKRDLGMSKEPGVVSPTSYLDVD. Positions 2274–2294 form an intramembrane region, helical; the sequence is LHPASAWTLYAVATTVITPML. Over 2295-2305 the chain is Lumenal; it reads RHTIENSTANV. 2 N-linked (GlcNAc...) asparagine; by host glycosylation sites follow: Asn2300 and Asn2304. The segment at residues 2306–2326 is an intramembrane region (helical); it reads SLAAIANQAVVLMGLDKGWPI. Residues 2327–2346 lie on the Lumenal side of the membrane; that stretch reads SKMDLGVPLLALGCYSQVNP. Residues 2347 to 2367 form a helical membrane-spanning segment; that stretch reads LTLIAAVLLLVTHYAIIGPGL. Residues 2368 to 2412 are Cytoplasmic-facing; that stretch reads QAKATREAQKRTAAGIMKNPTVDGIMTIDLDPVIYDSKFEKQLGQ. The chain crosses the membrane as a helical span at residues 2413 to 2433; sequence VMLLVLCAVQLLLMRTSWALC. The Lumenal portion of the chain corresponds to 2434 to 2458; it reads EVLTLATGPITTLWEGSPGKFWNTT. Asn2456 is a glycosylation site (N-linked (GlcNAc...) asparagine; by host). Residues 2459–2479 form a helical membrane-spanning segment; the sequence is IAVSMANIFRGSYLAGAGLAF. Over 2480-3390 the chain is Cytoplasmic; it reads SIMKSVGTGK…KEEESEGAIW (911 aa). The mRNA cap 0-1 NS5-type MT domain maps to 2492–2753; sequence TGSQGETLGE…DVDLGAGTRH (262 aa). Residue Ser2546 coordinates S-adenosyl-L-methionine. Ser2546 is modified (phosphoserine). Lys2551 serves as the catalytic For 2'-O-MTase activity. Positions 2567 to 2570 match the SUMO-interacting motif motif; sequence VIDL. Positions 2576, 2577, 2594, 2595, 2621, and 2622 each coordinate S-adenosyl-L-methionine. Asp2636 (for 2'-O-MTase activity) is an active-site residue. Ile2637 contributes to the S-adenosyl-L-methionine binding site. Active-site for 2'-O-MTase activity residues include Lys2670 and Glu2706. Tyr2708 provides a ligand contact to S-adenosyl-L-methionine. The Zn(2+) site is built by Glu2927, His2931, Cys2936, and Cys2939. Positions 3018-3168 constitute a RdRp catalytic domain; that stretch reads AMYADDTAGW…PIDDRFANAL (151 aa). His3202, Cys3218, and Cys3337 together coordinate Zn(2+).

In the N-terminal section; belongs to the class I-like SAM-binding methyltransferase superfamily. mRNA cap 0-1 NS5-type methyltransferase family. In terms of assembly, homodimer. Interacts (via N-terminus) with host EXOC1 (via C-terminus); this interaction results in EXOC1 degradation through the proteasome degradation pathway. As to quaternary structure, forms heterodimers with envelope protein E in the endoplasmic reticulum and Golgi. Homodimer; in the endoplasmic reticulum and Golgi. Interacts with protein prM. Interacts with non-structural protein 1. In terms of assembly, homodimer; Homohexamer when secreted. Interacts with envelope protein E. As to quaternary structure, interacts (via N-terminus) with serine protease NS3. Forms a heterodimer with serine protease NS3. May form homooligomers. In terms of assembly, forms a heterodimer with NS2B. Interacts with NS4B. Interacts with unphosphorylated RNA-directed RNA polymerase NS5; this interaction stimulates RNA-directed RNA polymerase NS5 guanylyltransferase activity. As to quaternary structure, interacts with host MAVS; this interaction inhibits the synthesis of IFN-beta. Interacts with host AUP1; the interaction occurs in the presence of Dengue virus NS4B and induces lipophagy which facilitates production of virus progeny particles. Interacts with serine protease NS3. In terms of assembly, homodimer. Interacts with host STAT2; this interaction inhibits the phosphorylation of the latter, and, when all viral proteins are present (polyprotein), targets STAT2 for degradation. Interacts with serine protease NS3. In terms of processing, specific enzymatic cleavages in vivo yield mature proteins. Cleavages in the lumen of endoplasmic reticulum are performed by host signal peptidase, whereas cleavages in the cytoplasmic side are performed by serine protease NS3. Signal cleavage at the 2K-4B site requires a prior NS3 protease-mediated cleavage at the 4A-2K site. Post-translationally, cleaved in post-Golgi vesicles by a host furin, releasing the mature small envelope protein M, and peptide pr. This cleavage is incomplete as up to 30% of viral particles still carry uncleaved prM. N-glycosylated. In terms of processing, N-glycosylated. The excreted form is glycosylated and this is required for efficient secretion of the protein from infected cells. Post-translationally, acetylated by host KAT5. Acetylation modulates NS3 RNA-binding and unwinding activities and plays an important positive role for viral replication. Sumoylation of RNA-directed RNA polymerase NS5 increases NS5 protein stability allowing proper viral RNA replication. In terms of processing, phosphorylated on serines residues. This phosphorylation may trigger NS5 nuclear localization.

Its subcellular location is the virion. The protein resides in the host nucleus. It is found in the host cytoplasm. It localises to the host perinuclear region. The protein localises to the secreted. Its subcellular location is the virion membrane. The protein resides in the host endoplasmic reticulum membrane. It is found in the host mitochondrion. The enzyme catalyses Selective hydrolysis of -Xaa-Xaa-|-Yaa- bonds in which each of the Xaa can be either Arg or Lys and Yaa can be either Ser or Ala.. The catalysed reaction is RNA(n) + a ribonucleoside 5'-triphosphate = RNA(n+1) + diphosphate. It catalyses the reaction a ribonucleoside 5'-triphosphate + H2O = a ribonucleoside 5'-diphosphate + phosphate + H(+). It carries out the reaction ATP + H2O = ADP + phosphate + H(+). The enzyme catalyses a 5'-end (5'-triphosphoguanosine)-ribonucleoside in mRNA + S-adenosyl-L-methionine = a 5'-end (N(7)-methyl 5'-triphosphoguanosine)-ribonucleoside in mRNA + S-adenosyl-L-homocysteine. The catalysed reaction is a 5'-end (N(7)-methyl 5'-triphosphoguanosine)-ribonucleoside in mRNA + S-adenosyl-L-methionine = a 5'-end (N(7)-methyl 5'-triphosphoguanosine)-(2'-O-methyl-ribonucleoside) in mRNA + S-adenosyl-L-homocysteine + H(+). Plays a role in virus budding by binding to the cell membrane and gathering the viral RNA into a nucleocapsid that forms the core of a mature virus particle. During virus entry, may induce genome penetration into the host cytoplasm after hemifusion induced by the surface proteins. Can migrate to the cell nucleus where it modulates host functions. Overcomes the anti-viral effects of host EXOC1 by sequestering and degrading the latter through the proteasome degradation pathway. Its function is as follows. Inhibits RNA silencing by interfering with host Dicer. In terms of biological role, prevents premature fusion activity of envelope proteins in trans-Golgi by binding to envelope protein E at pH6.0. After virion release in extracellular space, gets dissociated from E dimers. Functionally, acts as a chaperone for envelope protein E during intracellular virion assembly by masking and inactivating envelope protein E fusion peptide. prM is the only viral peptide matured by host furin in the trans-Golgi network probably to avoid catastrophic activation of the viral fusion activity in acidic Golgi compartment prior to virion release. prM-E cleavage is inefficient, and many virions are only partially matured. These uncleaved prM would play a role in immune evasion. May play a role in virus budding. Exerts cytotoxic effects by activating a mitochondrial apoptotic pathway through M ectodomain. May display a viroporin activity. Its function is as follows. Binds to host cell surface receptor and mediates fusion between viral and cellular membranes. Envelope protein is synthesized in the endoplasmic reticulum in the form of heterodimer with protein prM. They play a role in virion budding in the ER, and the newly formed immature particle is covered with 60 spikes composed of heterodimer between precursor prM and envelope protein E. The virion is transported to the Golgi apparatus where the low pH causes dissociation of PrM-E heterodimers and formation of E homodimers. prM-E cleavage is inefficient, and many virions are only partially matured. These uncleaved prM would play a role in immune evasion. In terms of biological role, involved in immune evasion, pathogenesis and viral replication. Once cleaved off the polyprotein, is targeted to three destinations: the viral replication cycle, the plasma membrane and the extracellular compartment. Essential for viral replication. Required for formation of the replication complex and recruitment of other non-structural proteins to the ER-derived membrane structures. Excreted as a hexameric lipoparticle that plays a role against host immune response. Antagonizing the complement function. Binds to the host macrophages and dendritic cells. Inhibits signal transduction originating from Toll-like receptor 3 (TLR3). Functionally, disrupts the host endothelial glycocalyx layer of host pulmonary microvascular endothelial cells, inducing degradation of sialic acid and shedding of heparan sulfate proteoglycans. NS1 induces expression of sialidases, heparanase, and activates cathepsin L, which activates heparanase via enzymatic cleavage. These effects are probably linked to the endothelial hyperpermeability observed in severe dengue disease. Component of the viral RNA replication complex that functions in virion assembly and antagonizes the host immune response. Its function is as follows. Required cofactor for the serine protease function of NS3. May have membrane-destabilizing activity and form viroporins. In terms of biological role, displays three enzymatic activities: serine protease, NTPase and RNA helicase. NS3 serine protease, in association with NS2B, performs its autocleavage and cleaves the polyprotein at dibasic sites in the cytoplasm: C-prM, NS2A-NS2B, NS2B-NS3, NS3-NS4A, NS4A-2K and NS4B-NS5. NS3 RNA helicase binds RNA and unwinds dsRNA in the 3' to 5' direction. Functionally, regulates the ATPase activity of the NS3 helicase activity. NS4A allows NS3 helicase to conserve energy during unwinding. Plays a role in the inhibition of the host innate immune response. Interacts with host MAVS and thereby prevents the interaction between RIGI and MAVS. In turn, IFN-beta production is impaired. Interacts with host AUP1 which mediates induction of lipophagy in host cells and facilitates production of virus progeny particles. Functions as a signal peptide for NS4B and is required for the interferon antagonism activity of the latter. Its function is as follows. Induces the formation of ER-derived membrane vesicles where the viral replication takes place. Inhibits interferon (IFN)-induced host STAT1 phosphorylation and nuclear translocation, thereby preventing the establishment of cellular antiviral state by blocking the IFN-alpha/beta pathway. In terms of biological role, replicates the viral (+) and (-) RNA genome, and performs the capping of genomes in the cytoplasm. NS5 methylates viral RNA cap at guanine N-7 and ribose 2'-O positions. Besides its role in RNA genome replication, also prevents the establishment of cellular antiviral state by blocking the interferon-alpha/beta (IFN-alpha/beta) signaling pathway. Inhibits host TYK2 and STAT2 phosphorylation, thereby preventing activation of JAK-STAT signaling pathway. In Dengue virus type 3 (strain China/80-2/1980) (DENV-3), this protein is Genome polyprotein.